Reading from the N-terminus, the 129-residue chain is Probable cytochrome b5 2 (129 aa).

Positions 3–79 constitute a Cytochrome b5 heme-binding domain; it reads EKTITVEEVL…LEKFYIGNLL (77 aa). Residues His-38 and His-62 each coordinate heme. A helical transmembrane segment spans residues 105–125; sequence VKPAMWLFVLVMVVAYFAFRK.

This sequence belongs to the cytochrome b5 family.

The protein resides in the endoplasmic reticulum membrane. Its subcellular location is the microsome membrane. It is found in the mitochondrion. In terms of biological role, membrane bound hemoprotein which function as an electron carrier for several membrane bound oxygenases. This Schizosaccharomyces pombe (strain 972 / ATCC 24843) (Fission yeast) protein is Probable cytochrome b5 2 (oca8).